The chain runs to 199 residues: Proteasome subunit beta type-2 (199 aa).

Belongs to the peptidase T1B family. As to quaternary structure, the 26S proteasome consists of a 20S proteasome core and two 19S regulatory subunits. The 20S proteasome core is composed of 28 subunits that are arranged in four stacked rings, resulting in a barrel-shaped structure. The two end rings are each formed by seven alpha subunits, and the two central rings are each formed by seven beta subunits. The catalytic chamber with the active sites is on the inside of the barrel.

The protein resides in the cytoplasm. It localises to the nucleus. Non-catalytic component of the proteasome, a multicatalytic proteinase complex which is characterized by its ability to cleave peptides with Arg, Phe, Tyr, Leu, and Glu adjacent to the leaving group at neutral or slightly basic pH. The proteasome has an ATP-dependent proteolytic activity. In Caenorhabditis elegans, this protein is Proteasome subunit beta type-2 (pbs-4).